The sequence spans 303 residues: ATP synthase gamma chain (303 aa).

Belongs to the ATPase gamma chain family. In terms of assembly, F-type ATPases have 2 components, CF(1) - the catalytic core - and CF(0) - the membrane proton channel. CF(1) has five subunits: alpha(3), beta(3), gamma(1), delta(1), epsilon(1). CF(0) has three main subunits: a, b and c.

It localises to the cell inner membrane. Its function is as follows. Produces ATP from ADP in the presence of a proton gradient across the membrane. The gamma chain is believed to be important in regulating ATPase activity and the flow of protons through the CF(0) complex. The protein is ATP synthase gamma chain of Bartonella quintana (strain Toulouse) (Rochalimaea quintana).